Consider the following 780-residue polypeptide: Putative ABC transporter ATP-binding protein BL0043 (780 aa).

ABC transporter domains lie at 2–238 and 282–531; these read LKDI…QSET and IRVS…GPAH. Residue 34–41 participates in ATP binding; sequence GPNGSGKS. A disordered region spans residues 230 to 272; the sequence is AEAVSQSETEGSIGTEAAPSRPTNDSPRQREREDGSELPLLSD. 316–323 contributes to the ATP binding site; the sequence is GVNGSGKS. 4 helical membrane-spanning segments follow: residues 551–573, 586–608, 623–645, and 759–778; these read FTMF…LAVI, SIHP…VRTG, GVTI…AVFL, and IAAR…AAII.

The protein belongs to the ABC transporter superfamily.

It is found in the cell membrane. In terms of biological role, probably part of an ABC transporter complex. Responsible for energy coupling to the transport system. This chain is Putative ABC transporter ATP-binding protein BL0043, found in Bifidobacterium longum (strain NCC 2705).